The sequence spans 368 residues: Xaa-Pro dipeptidase (368 aa).

Mn(2+) is bound by residues Asp-223, Asp-234, His-298, Glu-327, and Glu-341.

The protein belongs to the peptidase M24B family. The cofactor is Mn(2+).

It localises to the cytoplasm. The enzyme catalyses Xaa-L-Pro dipeptide + H2O = an L-alpha-amino acid + L-proline. The sequence is that of Xaa-Pro dipeptidase (pepQ) from Lactobacillus delbrueckii subsp. lactis.